Reading from the N-terminus, the 312-residue chain is Aspartoacylase (312 aa).

Residues histidine 20 and glutamate 23 each contribute to the Zn(2+) site. Residues arginine 62, asparagine 69, and arginine 70 each coordinate N-acetyl-L-aspartate. Histidine 115 lines the Zn(2+) pocket. N-acetyl-L-aspartate is bound by residues tyrosine 163 and arginine 167. Catalysis depends on glutamate 177, which acts as the Proton donor/acceptor. N-acetyl-L-aspartate is bound at residue tyrosine 287.

Belongs to the AspA/AstE family. Aspartoacylase subfamily. Homodimer. Zn(2+) serves as cofactor. As to expression, detected in kidney proximal tubule cells (at protein level).

It localises to the cytoplasm. The protein localises to the nucleus. It carries out the reaction an N-acyl-L-aspartate + H2O = a carboxylate + L-aspartate. The catalysed reaction is N-acetyl-L-aspartate + H2O = L-aspartate + acetate. Functionally, catalyzes the deacetylation of N-acetylaspartic acid (NAA) to produce acetate and L-aspartate. NAA occurs in high concentration in brain and its hydrolysis NAA plays a significant part in the maintenance of intact white matter. In other tissues it acts as a scavenger of NAA from body fluids. The polypeptide is Aspartoacylase (Rattus norvegicus (Rat)).